The chain runs to 1412 residues: Sister chromatid cohesion protein PDS5 homolog B (1412 aa).

Residues 383 to 419 (LLVNDHLLNFVRERTLDKRWRVRKEAMMGLAQIYKKY) form an HEAT repeat. Residues 1137–1412 (PLSSAGKQSQ…RRRTSKRERR (276 aa)) are disordered. 2 stretches are compositionally biased toward low complexity: residues 1139 to 1149 (SSAGKQSQSKS) and 1156 to 1167 (SNASSSSNPSSP). Composition is skewed to basic and acidic residues over residues 1172-1184 (GRLD…HSEN), 1196-1212 (KKTD…LEKP), 1223-1241 (SEEK…DQKL), and 1263-1272 (QEEKRLKEDV). Residues 1322 to 1331 (VEEEEEEEER) show a composition bias toward acidic residues. Over residues 1350-1362 (RTQQSRAGRSKQA) the composition is skewed to polar residues. Residues 1386–1397 (VPQEEVMEEEEV) are compositionally biased toward acidic residues. Residues 1402–1412 (VRRRTSKRERR) show a composition bias toward basic residues.

Interacts with the cohesin complex.

It localises to the nucleus. Its function is as follows. Plays a role in androgen-induced proliferative arrest. Required for maintenance of sister chromatid cohesion during mitosis. This is Sister chromatid cohesion protein PDS5 homolog B (PDS5B) from Gallus gallus (Chicken).